A 328-amino-acid polypeptide reads, in one-letter code: Glycerol-3-phosphate dehydrogenase [NAD(P)+] (328 aa).

Residues Trp-15, His-35, Tyr-51, and Lys-107 each coordinate NADPH. Sn-glycerol 3-phosphate is bound by residues Lys-107, Gly-135, and Ser-137. Ala-139 lines the NADPH pocket. Residues Lys-190, Asp-243, Ser-253, Arg-254, and Asn-255 each coordinate sn-glycerol 3-phosphate. Lys-190 functions as the Proton acceptor in the catalytic mechanism. Arg-254 contacts NADPH. 2 residues coordinate NADPH: Leu-276 and Glu-278.

This sequence belongs to the NAD-dependent glycerol-3-phosphate dehydrogenase family.

The protein localises to the cytoplasm. The catalysed reaction is sn-glycerol 3-phosphate + NAD(+) = dihydroxyacetone phosphate + NADH + H(+). The enzyme catalyses sn-glycerol 3-phosphate + NADP(+) = dihydroxyacetone phosphate + NADPH + H(+). It functions in the pathway membrane lipid metabolism; glycerophospholipid metabolism. In terms of biological role, catalyzes the reduction of the glycolytic intermediate dihydroxyacetone phosphate (DHAP) to sn-glycerol 3-phosphate (G3P), the key precursor for phospholipid synthesis. The polypeptide is Glycerol-3-phosphate dehydrogenase [NAD(P)+] (Rhodopseudomonas palustris (strain BisA53)).